A 360-amino-acid chain; its full sequence is Dihydroorotate dehydrogenase (quinone) (360 aa).

FMN contacts are provided by residues 65–69 and Thr89; that span reads AGLDK. Residue Lys69 coordinates substrate. 114 to 118 is a binding site for substrate; sequence NRLGF. FMN-binding residues include Asn147 and Asn180. Asn180 provides a ligand contact to substrate. Residue Ser183 is the Nucleophile of the active site. Asn185 contributes to the substrate binding site. The FMN site is built by Lys225 and Thr253. A substrate-binding site is contributed by 254-255; that stretch reads NT. FMN is bound by residues Gly276, Gly305, and 326 to 327; that span reads YT.

The protein belongs to the dihydroorotate dehydrogenase family. Type 2 subfamily. In terms of assembly, monomer. It depends on FMN as a cofactor.

The protein resides in the cell membrane. It catalyses the reaction (S)-dihydroorotate + a quinone = orotate + a quinol. It functions in the pathway pyrimidine metabolism; UMP biosynthesis via de novo pathway; orotate from (S)-dihydroorotate (quinone route): step 1/1. Catalyzes the conversion of dihydroorotate to orotate with quinone as electron acceptor. The polypeptide is Dihydroorotate dehydrogenase (quinone) (Verminephrobacter eiseniae (strain EF01-2)).